Reading from the N-terminus, the 207-residue chain is Ribosomal RNA small subunit methyltransferase G (207 aa).

Residues Gly-73, Leu-78, 124–125, and Arg-139 each bind S-adenosyl-L-methionine; that span reads VE.

The protein belongs to the methyltransferase superfamily. RNA methyltransferase RsmG family.

The protein localises to the cytoplasm. The catalysed reaction is guanosine(527) in 16S rRNA + S-adenosyl-L-methionine = N(7)-methylguanosine(527) in 16S rRNA + S-adenosyl-L-homocysteine. Specifically methylates the N7 position of guanine in position 527 of 16S rRNA. In Shigella flexneri, this protein is Ribosomal RNA small subunit methyltransferase G.